The chain runs to 429 residues: Septin-8 (429 aa).

Residues 1–16 (MAATDLERVSNAEPEP) show a composition bias toward basic and acidic residues. A disordered region spans residues 1 to 23 (MAATDLERVSNAEPEPRSLSLGG). An N-acetylalanine modification is found at alanine 2. The residue at position 10 (serine 10) is a Phosphoserine. Residues 41 to 307 (QGFSFNILCV…ELYRRCKLEE (267 aa)) form the Septin-type G domain. Positions 51 to 58 (GETGIGKS) are G1 motif. GTP contacts are provided by residues 51-58 (GETGIGKS), glycine 106, 187-195 (KADTISKSE), glycine 241, and arginine 256. Residues 103-106 (DAVG) form a G3 motif region. Positions 186–189 (AKAD) are G4 motif. A coiled-coil region spans residues 320–412 (FSLQETYEAK…AAMEALQSQA (93 aa)). Over residues 409–420 (QSQALHATSQQP) the composition is skewed to polar residues. Positions 409–429 (QSQALHATSQQPLRKDKDKKN) are disordered.

Belongs to the TRAFAC class TrmE-Era-EngA-EngB-Septin-like GTPase superfamily. Septin GTPase family. Septins polymerize into heterooligomeric protein complexes that form filaments, and can associate with cellular membranes, actin filaments and microtubules. GTPase activity is required for filament formation. Interacts with SEPTIN5. Interacts with CDK14, SEPTIN4 and SEPTIN7. Interacts with VAMP2; the interaction inhibits interaction of VAMP2 with SYP. Interacts with STX1A.

It localises to the cytoplasm. The protein resides in the cytoskeleton. It is found in the synapse. Its subcellular location is the cell projection. The protein localises to the axon. It localises to the cytoplasmic vesicle. The protein resides in the secretory vesicle. It is found in the synaptic vesicle membrane. Its subcellular location is the presynapse. Functionally, filament-forming cytoskeletal GTPase. May play a role in platelet secretion. Seems to participate in the process of SNARE complex formation in synaptic vesicles. This is Septin-8 from Mus musculus (Mouse).